Here is a 230-residue protein sequence, read N- to C-terminus: MLERAPVVTVDGPSGAGKGTISQLLAEKLGYKLLDSGAIYRVLALAAIHHNVELDNEESLTLLAAHLDVQFITGNESKGIKVVLEGEDVSTTIRSQECSNAASKVAAFPRVREALLRRQRAFAEAPGLIADGRDMGTVVFPATPAKLFLTASAEERAQRRYNQLQDNGFDVKIDQLLSEIKERDDRDMNRSVAPLVPAEDALVIDTTNISIEDVLAMALTHIHKSFQVPA.

An ATP-binding site is contributed by 12–20 (GPSGAGKGT).

The protein belongs to the cytidylate kinase family. Type 1 subfamily.

Its subcellular location is the cytoplasm. It carries out the reaction CMP + ATP = CDP + ADP. The enzyme catalyses dCMP + ATP = dCDP + ADP. The polypeptide is Cytidylate kinase (Shewanella piezotolerans (strain WP3 / JCM 13877)).